The chain runs to 143 residues: Small ribosomal subunit protein eS12 (143 aa).

Residues Lys85, Lys95, and Lys114 each participate in a glycyl lysine isopeptide (Lys-Gly) (interchain with G-Cter in ubiquitin) cross-link.

The protein belongs to the eukaryotic ribosomal protein eS12 family. Component of the small ribosomal subunit (SSU). Mature yeast ribosomes consist of a small (40S) and a large (60S) subunit. The 40S small subunit contains 1 molecule of ribosomal RNA (18S rRNA) and 33 different proteins (encoded by 57 genes). The large 60S subunit contains 3 rRNA molecules (25S, 5.8S and 5S rRNA) and 46 different proteins (encoded by 81 genes).

The protein resides in the cytoplasm. Its function is as follows. Component of the ribosome, a large ribonucleoprotein complex responsible for the synthesis of proteins in the cell. The small ribosomal subunit (SSU) binds messenger RNAs (mRNAs) and translates the encoded message by selecting cognate aminoacyl-transfer RNA (tRNA) molecules. The large subunit (LSU) contains the ribosomal catalytic site termed the peptidyl transferase center (PTC), which catalyzes the formation of peptide bonds, thereby polymerizing the amino acids delivered by tRNAs into a polypeptide chain. The nascent polypeptides leave the ribosome through a tunnel in the LSU and interact with protein factors that function in enzymatic processing, targeting, and the membrane insertion of nascent chains at the exit of the ribosomal tunnel. The sequence is that of Small ribosomal subunit protein eS12 from Saccharomyces cerevisiae (strain ATCC 204508 / S288c) (Baker's yeast).